We begin with the raw amino-acid sequence, 79 residues long: CDC42 small effector protein 1 (79 aa).

S-palmitoyl cysteine attachment occurs at residues Cys-10 and Cys-11. The CRIB domain maps to 30-43; it reads IGEPMNFVHLTHIG. Residues 48 to 79 form a disordered region; that stretch reads GAGDGLAMTGAVQEQMRSKGNRDRPWSNSRGL. Positions 63 to 72 are enriched in basic and acidic residues; it reads MRSKGNRDRP.

It belongs to the CDC42SE/SPEC family. Interacts with CDC42 (in GTP-bound form). Interacts weakly with RAC1 and not at all with RHOA.

Its subcellular location is the cytoplasm. It localises to the cytoskeleton. The protein localises to the cell membrane. In terms of biological role, probably involved in the organization of the actin cytoskeleton by acting downstream of CDC42, inducing actin filament assembly. Alters CDC42-induced cell shape changes. In activated T-cells, may play a role in CDC42-mediated F-actin accumulation at the immunological synapse. May play a role in early contractile events in phagocytosis in macrophages. In Bos taurus (Bovine), this protein is CDC42 small effector protein 1 (CDC42SE1).